Here is a 394-residue protein sequence, read N- to C-terminus: p-hydroxybenzoate hydroxylase (394 aa).

Residues Ser-13, Glu-32, 42 to 47 (RIRAGV), and Gln-102 contribute to the FAD site. Residues Tyr-201, 212-214 (SQR), and Tyr-222 contribute to the substrate site. Residue Asp-286 participates in FAD binding. Residue Pro-293 coordinates substrate. FAD is bound at residue 299–300 (LN).

It belongs to the aromatic-ring hydroxylase family. Homodimer. It depends on FAD as a cofactor.

The catalysed reaction is 4-hydroxybenzoate + NADPH + O2 + H(+) = 3,4-dihydroxybenzoate + NADP(+) + H2O. It functions in the pathway aromatic compound metabolism; benzoate degradation via hydroxylation; 3,4-dihydroxybenzoate from benzoate: step 2/2. In terms of biological role, catalyzes the incorporation of an atom of dioxygen into p-hydroxybenzoate (p-OHB) to form 3,4-dihydroxybenzoate (3,4DOHB). The reaction occurs in two parts: reduction of the flavin adenine dinucleotide (FAD) in the enzyme by reduced nicotinamide adenine dinucleotide phosphate (NADPH) in response to binding p-hydroxybenzoate to the enzyme and oxidation of reduced FAD with oxygen to form a hydroperoxide, which then oxygenates p-hydroxybenzoate. The sequence is that of p-hydroxybenzoate hydroxylase (pobA) from Pseudomonas fluorescens.